The following is a 247-amino-acid chain: 5-oxoprolinase subunit A (247 aa).

Belongs to the LamB/PxpA family. In terms of assembly, forms a complex composed of PxpA, PxpB and PxpC.

It catalyses the reaction 5-oxo-L-proline + ATP + 2 H2O = L-glutamate + ADP + phosphate + H(+). Catalyzes the cleavage of 5-oxoproline to form L-glutamate coupled to the hydrolysis of ATP to ADP and inorganic phosphate. In Vibrio vulnificus (strain YJ016), this protein is 5-oxoprolinase subunit A.